The sequence spans 237 residues: Ribonuclease PH (237 aa).

Residues arginine 86 and 124–126 (GTR) contribute to the phosphate site.

This sequence belongs to the RNase PH family. As to quaternary structure, homohexameric ring arranged as a trimer of dimers.

It carries out the reaction tRNA(n+1) + phosphate = tRNA(n) + a ribonucleoside 5'-diphosphate. Phosphorolytic 3'-5' exoribonuclease that plays an important role in tRNA 3'-end maturation. Removes nucleotide residues following the 3'-CCA terminus of tRNAs; can also add nucleotides to the ends of RNA molecules by using nucleoside diphosphates as substrates, but this may not be physiologically important. Probably plays a role in initiation of 16S rRNA degradation (leading to ribosome degradation) during starvation. This is Ribonuclease PH from Shewanella pealeana (strain ATCC 700345 / ANG-SQ1).